We begin with the raw amino-acid sequence, 193 residues long: Pyridoxal 5'-phosphate synthase subunit PdxT (193 aa).

48–50 (GES) lines the L-glutamine pocket. Catalysis depends on Cys80, which acts as the Nucleophile. Residues Arg112 and 140–141 (IR) each bind L-glutamine. Residues His176 and Glu178 each act as charge relay system in the active site.

It belongs to the glutaminase PdxT/SNO family. In the presence of PdxS, forms a dodecamer of heterodimers. Only shows activity in the heterodimer.

The catalysed reaction is aldehydo-D-ribose 5-phosphate + D-glyceraldehyde 3-phosphate + L-glutamine = pyridoxal 5'-phosphate + L-glutamate + phosphate + 3 H2O + H(+). It carries out the reaction L-glutamine + H2O = L-glutamate + NH4(+). The protein operates within cofactor biosynthesis; pyridoxal 5'-phosphate biosynthesis. Catalyzes the hydrolysis of glutamine to glutamate and ammonia as part of the biosynthesis of pyridoxal 5'-phosphate. The resulting ammonia molecule is channeled to the active site of PdxS. This Mycolicibacterium smegmatis (strain ATCC 700084 / mc(2)155) (Mycobacterium smegmatis) protein is Pyridoxal 5'-phosphate synthase subunit PdxT.